Reading from the N-terminus, the 155-residue chain is 6,7-dimethyl-8-ribityllumazine synthase (155 aa).

Residues F23, A57–E59, and A81–I83 contribute to the 5-amino-6-(D-ribitylamino)uracil site. A86–T87 contributes to the (2S)-2-hydroxy-3-oxobutyl phosphate binding site. H89 acts as the Proton donor in catalysis. F114 contributes to the 5-amino-6-(D-ribitylamino)uracil binding site. R128 provides a ligand contact to (2S)-2-hydroxy-3-oxobutyl phosphate.

Belongs to the DMRL synthase family.

The enzyme catalyses (2S)-2-hydroxy-3-oxobutyl phosphate + 5-amino-6-(D-ribitylamino)uracil = 6,7-dimethyl-8-(1-D-ribityl)lumazine + phosphate + 2 H2O + H(+). It functions in the pathway cofactor biosynthesis; riboflavin biosynthesis; riboflavin from 2-hydroxy-3-oxobutyl phosphate and 5-amino-6-(D-ribitylamino)uracil: step 1/2. Its function is as follows. Catalyzes the formation of 6,7-dimethyl-8-ribityllumazine by condensation of 5-amino-6-(D-ribitylamino)uracil with 3,4-dihydroxy-2-butanone 4-phosphate. This is the penultimate step in the biosynthesis of riboflavin. This is 6,7-dimethyl-8-ribityllumazine synthase from Pelotomaculum thermopropionicum (strain DSM 13744 / JCM 10971 / SI).